A 65-amino-acid chain; its full sequence is UPF0434 protein BRADO0313 (65 aa).

The protein belongs to the UPF0434 family.

The polypeptide is UPF0434 protein BRADO0313 (Bradyrhizobium sp. (strain ORS 278)).